Reading from the N-terminus, the 208-residue chain is Thymidylate kinase (208 aa).

10 to 17 (GPEGSGKT) is an ATP binding site.

The protein belongs to the thymidylate kinase family.

It carries out the reaction dTMP + ATP = dTDP + ADP. In terms of biological role, phosphorylation of dTMP to form dTDP in both de novo and salvage pathways of dTTP synthesis. In Bacillus cereus (strain ATCC 10987 / NRS 248), this protein is Thymidylate kinase.